Reading from the N-terminus, the 162-residue chain is Ribonuclease (162 aa).

The N-terminal stretch at 1 to 29 is a signal peptide; the sequence is MKKISSVFTMFALIAAILFSGFIPQQAYA. Positions 30-53 are excised as a propeptide; sequence ETTLTPTATNKTASIQLTSDVHTL. The active-site Proton acceptor is Glu-125. His-154 acts as the Proton donor in catalysis.

It belongs to the ribonuclease N1/T1 family.

The protein localises to the secreted. This is a purine-specific ribonuclease. In Bacillus pumilus (Bacillus mesentericus), this protein is Ribonuclease.